The primary structure comprises 178 residues: Alkyl hydroperoxide reductase AhpD (178 aa).

Residue cysteine 130 is the Proton donor of the active site. Residues cysteine 130 and cysteine 133 are joined by a disulfide bond. Cysteine 133 acts as the Cysteine sulfenic acid (-SOH) intermediate in catalysis.

Belongs to the AhpD family. Homotrimer.

It catalyses the reaction N(6)-[(R)-dihydrolipoyl]-L-lysyl-[lipoyl-carrier protein] + a hydroperoxide = N(6)-[(R)-lipoyl]-L-lysyl-[lipoyl-carrier protein] + an alcohol + H2O. Antioxidant protein with alkyl hydroperoxidase activity. Required for the reduction of the AhpC active site cysteine residues and for the regeneration of the AhpC enzyme activity. The protein is Alkyl hydroperoxide reductase AhpD of Mycobacterium marinum (strain ATCC BAA-535 / M).